A 293-amino-acid polypeptide reads, in one-letter code: uncharacterized protein (293 aa).

Disordered stretches follow at residues 1–23 and 52–83; these read MGWP…AQTD and ELQS…SELS. Basic and acidic residues predominate over residues 8-17; sequence KPEDSKEEHG. The span at 52–71 shows a compositional bias: polar residues; the sequence is ELQSYSHTSESPVETKTPTT.

This is an uncharacterized protein from Mus musculus (Mouse).